We begin with the raw amino-acid sequence, 205 residues long: Meiotic nuclear division protein 1 homolog (205 aa).

Residue S2 is modified to N-acetylserine. Residues 84-173 (HKLEVLESQL…EAANRWTDNI (90 aa)) adopt a coiled-coil conformation.

This sequence belongs to the MND1 family. Heterodimer with PSMC3IP/HOP2. MND1-PSMC3IP interacts with DMC1 and RAD51 and binds preferentially to dsDNA.

It localises to the nucleus. Required for proper homologous chromosome pairing and efficient cross-over and intragenic recombination during meiosis. Stimulates both DMC1- and RAD51-mediated homologous strand assimilation, which is required for the resolution of meiotic double-strand breaks. In Homo sapiens (Human), this protein is Meiotic nuclear division protein 1 homolog.